The following is a 710-amino-acid chain: Low-temperature-induced 78 kDa protein (710 aa).

Disordered stretches follow at residues 1 to 198 (MDQT…LDGQ), 225 to 269 (YQSK…RDLS), and 305 to 507 (GFGD…STYT). Basic and acidic residues predominate over residues 14-25 (QHPEEVEHHENG). Positions 29-41 (MFRKVKARAKKFK) are enriched in basic residues. The segment covering 49 to 58 (QSNEHEQDHD) has biased composition (basic and acidic residues). The segment covering 59-73 (LVEEDDDDDELEPEV) has biased composition (acidic residues). Positions 138–168 (SDKEEKRDVPIHHPLSELSDREESRETHHES) are enriched in basic and acidic residues. Residues 169-187 (LNTPVSLLSGTEDVTSTFA) are compositionally biased toward polar residues. Tandem repeats lie at residues 303–316 (PVGFGDESGAELEK), 317–331 (DFPTRSHDFDMKTET), 336–350 (NSPSRSHEFDLKTES), 357–370 (PMGFGSESGAELEK), and 398–412 (NFPVRSHELDLKNES). The interval 303 to 370 (PVGFGDESGA…GSESGAELEK (68 aa)) is 2 X 14 AA repeats of P-[MV]-G-F-G-[DS]-E-S-G-A-E-L-E-K. Basic and acidic residues-rich tracts occupy residues 313–331 (ELEKDFPTRSHDFDMKTET), 340–352 (RSHEFDLKTESGN), 367–380 (ELEKEFDQKNDSGR), 402–418 (RSHELDLKNESDIDKDV), 442–466 (EDKFPARSDDVEVETELGRDPKTET), and 475–487 (SHPKERDEFKESR). Positions 317–412 (DFPTRSHDFD…SHELDLKNES (96 aa)) are 3 X 15 AA repeats of [DN]-[FS]-P-[STV]-R-S-H-[DE]-[FL]-D-[LM]-K-[NT]-E-[ST]. Tandem repeats lie at residues 510–514 (FASML), 532–536 (VDEKL), and 550–554 (VTTKL). The segment at 510 to 600 (FASMLGYSGE…AFSDMVAEKL (91 aa)) is 5 X 5 AA repeats of [FV]-[ADT]-[EST]-[KM]-L. Residues 537 to 577 (TPVNEKDQETESAVTTKLPISGGGSGVEEQRGEDKSVSGRD) form a disordered region. Residues 564-577 (EEQRGEDKSVSGRD) are compositionally biased toward basic and acidic residues. Tandem repeats lie at residues 579-583 (VAEKL) and 596-600 (VAEKL). Residues 601–710 (QIGGEEEKKE…STVVPVQKEL (110 aa)) are disordered. A compositionally biased stretch (basic and acidic residues) spans 605–626 (EEEKKETTTKEVEKISTEKAAS). At Ser626 the chain carries Phosphoserine. The segment covering 638 to 654 (GGGGMVGRIKGWFGGGA) has biased composition (gly residues). 2 consecutive repeat copies span residues 648-670 (GWFGGGATDEVKPESPHSVEEAP) and 674-696 (GWFGGGATEEVKPKSPHSVEESP). The interval 648 to 696 (GWFGGGATDEVKPESPHSVEEAPKSSGWFGGGATEEVKPKSPHSVEESP) is 2 X 23 AA repeats. Composition is skewed to basic and acidic residues over residues 656–670 (DEVKPESPHSVEEAP) and 682–693 (EEVKPKSPHSVE).

Belongs to the LTI78/LTI65 family. In terms of tissue distribution, accumulates rapidly in leaves, stems, roots, flower petals, filaments, and sepals during cold-acclimation.

The protein resides in the cytoplasm. Involved in responses to abiotic stresses. Regulates probably root elongation in cold conditions. The polypeptide is Low-temperature-induced 78 kDa protein (Arabidopsis thaliana (Mouse-ear cress)).